The primary structure comprises 337 residues: Casein kinase I isoform alpha-like (337 aa).

Lysine 8 carries the N6-acetyllysine modification. Residues 17 to 285 (YKLVRKIGSG…YLRQLFRILF (269 aa)) enclose the Protein kinase domain. ATP-binding positions include 23-31 (IGSGSFGDV) and lysine 46. Catalysis depends on aspartate 136, which acts as the Proton acceptor. Low complexity predominate over residues 309-325 (AASSSGQGQQAQTQTGK). Positions 309–337 (AASSSGQGQQAQTQTGKQTEKNKNNVKDN) are disordered. The span at 326 to 337 (QTEKNKNNVKDN) shows a compositional bias: basic and acidic residues.

Belongs to the protein kinase superfamily. CK1 Ser/Thr protein kinase family. Casein kinase I subfamily. In terms of assembly, interacts with FAM83A, FAM83B, FAM83C, FAM83D, FAM83E, FAM83F, FAM83G and FAM83H (via DUF1669).

The protein resides in the cytoplasm. The catalysed reaction is L-seryl-[protein] + ATP = O-phospho-L-seryl-[protein] + ADP + H(+). It carries out the reaction L-threonyl-[protein] + ATP = O-phospho-L-threonyl-[protein] + ADP + H(+). Casein kinases are operationally defined by their preferential utilization of acidic proteins such as caseins as substrates. It can phosphorylate a large number of proteins. Participates in Wnt signaling. This Homo sapiens (Human) protein is Casein kinase I isoform alpha-like (CSNK1A1L).